Consider the following 72-residue polypeptide: Putative snRNP Sm-like protein (72 aa).

The 69-residue stretch at 4 to 72 (RPLDILNDAL…RGDNVVYVSP (69 aa)) folds into the Sm domain.

The protein belongs to the snRNP Sm proteins family.

The sequence is that of Putative snRNP Sm-like protein from Methanococcoides burtonii (strain DSM 6242 / NBRC 107633 / OCM 468 / ACE-M).